The primary structure comprises 496 residues: Serine/threonine-protein kinase chk1 (496 aa).

Residues 10–272 enclose the Protein kinase domain; it reads YHIGREIGTG…VKHVVQHPWL (263 aa). Residues 16–24 and Lys-38 each bind ATP; that span reads IGTGAFASV. Asp-137 serves as the catalytic Proton acceptor.

This sequence belongs to the protein kinase superfamily. CAMK Ser/Thr protein kinase family. NIM1 subfamily. In terms of assembly, interacts with crb2. Interacts with rad3. Interacts with rfp1. In terms of processing, phosphorylated.

It localises to the nucleus. The enzyme catalyses L-seryl-[protein] + ATP = O-phospho-L-seryl-[protein] + ADP + H(+). The catalysed reaction is L-threonyl-[protein] + ATP = O-phospho-L-threonyl-[protein] + ADP + H(+). Serine/threonine-protein kinase which is required for checkpoint-mediated cell cycle arrest and activation of DNA repair in response to the presence of DNA damage or unreplicated DNA. May also negatively regulate cell cycle progression during unperturbed cell cycles. Binds to and phosphorylates CDC25. This leads to negative regulation of CDC25 and prevents mitotic entry. The protein is Serine/threonine-protein kinase chk1 (chk1) of Schizosaccharomyces pombe (strain 972 / ATCC 24843) (Fission yeast).